Here is a 330-residue protein sequence, read N- to C-terminus: Aspartate--ammonia ligase (330 aa).

The protein belongs to the class-II aminoacyl-tRNA synthetase family. AsnA subfamily.

The protein resides in the cytoplasm. It catalyses the reaction L-aspartate + NH4(+) + ATP = L-asparagine + AMP + diphosphate + H(+). It functions in the pathway amino-acid biosynthesis; L-asparagine biosynthesis; L-asparagine from L-aspartate (ammonia route): step 1/1. The sequence is that of Aspartate--ammonia ligase from Shigella sonnei (strain Ss046).